Consider the following 247-residue polypeptide: PF03932 family protein CutC (247 aa).

This sequence belongs to the CutC family.

Its subcellular location is the cytoplasm. This chain is PF03932 family protein CutC, found in Chromobacterium violaceum (strain ATCC 12472 / DSM 30191 / JCM 1249 / CCUG 213 / NBRC 12614 / NCIMB 9131 / NCTC 9757 / MK).